A 158-amino-acid chain; its full sequence is 6,7-dimethyl-8-ribityllumazine synthase (158 aa).

5-amino-6-(D-ribitylamino)uracil-binding positions include Phe23, 61 to 63, and 85 to 87; these read SFE and AVI. 90–91 serves as a coordination point for (2S)-2-hydroxy-3-oxobutyl phosphate; the sequence is ET. His93 functions as the Proton donor in the catalytic mechanism. Phe118 lines the 5-amino-6-(D-ribitylamino)uracil pocket. Arg132 is a (2S)-2-hydroxy-3-oxobutyl phosphate binding site.

Belongs to the DMRL synthase family.

The enzyme catalyses (2S)-2-hydroxy-3-oxobutyl phosphate + 5-amino-6-(D-ribitylamino)uracil = 6,7-dimethyl-8-(1-D-ribityl)lumazine + phosphate + 2 H2O + H(+). Its pathway is cofactor biosynthesis; riboflavin biosynthesis; riboflavin from 2-hydroxy-3-oxobutyl phosphate and 5-amino-6-(D-ribitylamino)uracil: step 1/2. Catalyzes the formation of 6,7-dimethyl-8-ribityllumazine by condensation of 5-amino-6-(D-ribitylamino)uracil with 3,4-dihydroxy-2-butanone 4-phosphate. This is the penultimate step in the biosynthesis of riboflavin. The polypeptide is 6,7-dimethyl-8-ribityllumazine synthase (Prochlorococcus marinus (strain MIT 9312)).